The following is a 1405-amino-acid chain: DNA-directed RNA polymerase subunit beta' (1405 aa).

4 residues coordinate Zn(2+): cysteine 71, cysteine 73, cysteine 86, and cysteine 89. Mg(2+) contacts are provided by aspartate 462, aspartate 464, and aspartate 466. Zn(2+) contacts are provided by cysteine 820, cysteine 893, cysteine 900, and cysteine 903.

The protein belongs to the RNA polymerase beta' chain family. As to quaternary structure, the RNAP catalytic core consists of 2 alpha, 1 beta, 1 beta' and 1 omega subunit. When a sigma factor is associated with the core the holoenzyme is formed, which can initiate transcription. The cofactor is Mg(2+). Zn(2+) serves as cofactor.

It carries out the reaction RNA(n) + a ribonucleoside 5'-triphosphate = RNA(n+1) + diphosphate. DNA-dependent RNA polymerase catalyzes the transcription of DNA into RNA using the four ribonucleoside triphosphates as substrates. In Methylorubrum populi (strain ATCC BAA-705 / NCIMB 13946 / BJ001) (Methylobacterium populi), this protein is DNA-directed RNA polymerase subunit beta'.